The following is a 276-amino-acid chain: Aspartate dehydrogenase domain-containing protein (276 aa).

Belongs to the L-aspartate dehydrogenase family.

The chain is Aspartate dehydrogenase domain-containing protein (aspdh) from Danio rerio (Zebrafish).